The chain runs to 348 residues: Dihydroorotate dehydrogenase (quinone) (348 aa).

Residues 65 to 69 (AGLDK) and Thr89 contribute to the FMN site. A substrate-binding site is contributed by Lys69. Position 114-118 (114-118 (NRLGF)) interacts with substrate. Asn147 and Asn180 together coordinate FMN. Asn180 serves as a coordination point for substrate. The active-site Nucleophile is the Ser183. Position 185 (Asn185) interacts with substrate. Positions 225 and 253 each coordinate FMN. Position 254–255 (254–255 (NT)) interacts with substrate. Residues Gly276, Gly305, and 326-327 (YS) each bind FMN.

The protein belongs to the dihydroorotate dehydrogenase family. Type 2 subfamily. Monomer. Requires FMN as cofactor.

Its subcellular location is the cell membrane. It catalyses the reaction (S)-dihydroorotate + a quinone = orotate + a quinol. It functions in the pathway pyrimidine metabolism; UMP biosynthesis via de novo pathway; orotate from (S)-dihydroorotate (quinone route): step 1/1. Functionally, catalyzes the conversion of dihydroorotate to orotate with quinone as electron acceptor. This is Dihydroorotate dehydrogenase (quinone) from Delftia acidovorans (strain DSM 14801 / SPH-1).